The chain runs to 286 residues: uncharacterized protein (286 aa).

The AB hydrolase-1 domain occupies 26 to 268; sequence PLIILCHGFC…DACHYDIYEG (243 aa).

This sequence belongs to the AB hydrolase superfamily.

This is an uncharacterized protein from Escherichia coli.